A 448-amino-acid polypeptide reads, in one-letter code: Phosphoglucosamine mutase (448 aa).

Ser-101 serves as the catalytic Phosphoserine intermediate. Residues Ser-101, Asp-242, Asp-244, and Asp-246 each coordinate Mg(2+). Ser-101 bears the Phosphoserine mark.

This sequence belongs to the phosphohexose mutase family. Mg(2+) serves as cofactor. In terms of processing, activated by phosphorylation.

It carries out the reaction alpha-D-glucosamine 1-phosphate = D-glucosamine 6-phosphate. Catalyzes the conversion of glucosamine-6-phosphate to glucosamine-1-phosphate. This Nitrobacter winogradskyi (strain ATCC 25391 / DSM 10237 / CIP 104748 / NCIMB 11846 / Nb-255) protein is Phosphoglucosamine mutase.